We begin with the raw amino-acid sequence, 438 residues long: Aspartyl protease 25 (438 aa).

An N-terminal signal peptide occupies residues 1-23 (MAATTTIPLLLLLLAATVAAAAA). Positions 79 to 433 (YVVRAGLGSP…DVANSRVGFA (355 aa)) constitute a Peptidase A1 domain. Aspartate 97 is an active-site residue. Residues cysteine 107 and cysteine 113 are joined by a disulfide bond. N-linked (GlcNAc...) asparagine glycans are attached at residues asparagine 123, asparagine 193, and asparagine 282. Aspartate 313 is an active-site residue. Residues cysteine 352 and cysteine 394 are joined by a disulfide bond.

It belongs to the peptidase A1 family.

In terms of biological role, anther-specific aspartic protease involved in tapetal programmed cell death (PCD). Directly regulated by the transcription factor EAT1/DTD in anthers during tapetum PCD and degeneration. This Oryza sativa subsp. japonica (Rice) protein is Aspartyl protease 25.